The sequence spans 336 residues: Probable aquaglyceroporin-2 (336 aa).

The tract at residues 1–46 (MPISTINDSISESSVHKSSIPTKVEMSQNEKYSEAPSEAPTIPPPP) is disordered. Over 1 to 64 (MPISTINDSI…RENCQDAFSE (64 aa)) the chain is Cytoplasmic. Residues 9-19 (SISESSVHKSS) show a composition bias toward low complexity. Residues 65 to 85 (FFGTFVLLLFGDGVVAQVVLS) traverse the membrane as a helical segment. Topologically, residues 86 to 94 (RGTKGDYQS) are extracellular. Residues 95 to 115 (ISWGWGLGVMLGVYVGGKSGG) form a helical membrane-spanning segment. The Cytoplasmic segment spans residues 116-135 (HLNPAVTLANCLFRGHPWRK). Residues 118 to 120 (NPA) carry the NPA 1 motif. A helical membrane pass occupies residues 136–156 (FPIYAVAQVLGAMAAAAVVYG). Residues 157 to 195 (NYKSAIDAYEGGPGIRTVIGENATAGVFCTYPAEFMTRT) are Extracellular-facing. N-linked (GlcNAc...) asparagine glycosylation is present at asparagine 178. The helical transmembrane segment at 196 to 216 (GMFFSEFIASTILQFVIFAMA) threads the bilayer. Topologically, residues 217 to 223 (DSANIGA) are cytoplasmic. The chain crosses the membrane as a helical span at residues 224-244 (GPLMPLGLFFLIFGIGACFGW). Topologically, residues 245-280 (ETGYAINLARDFGPRLVSYMLGYGSEVWSAGGYYFW) are extracellular. The short motif at 251-253 (NLA) is the NPA 2 element. The helical transmembrane segment at 281–301 (IPMVAPFFGCAFGGFLYDVFI) threads the bilayer. The Cytoplasmic portion of the chain corresponds to 302 to 336 (YTGPSPINTPGMGFGRLVSPRRSTWSNTYNANSPV).

This sequence belongs to the MIP/aquaporin (TC 1.A.8) family.

It is found in the membrane. The catalysed reaction is H2O(in) = H2O(out). It catalyses the reaction glycerol(in) = glycerol(out). Its function is as follows. Probable water/glycerol channel that may have redundant functions with FgAQP4. In Gibberella zeae (strain ATCC MYA-4620 / CBS 123657 / FGSC 9075 / NRRL 31084 / PH-1) (Wheat head blight fungus), this protein is Probable aquaglyceroporin-2.